Reading from the N-terminus, the 314-residue chain is F-box protein AUF2 (314 aa).

The F-box domain maps to 1–49; the sequence is MDVFDGLPDPIIVDILNKVGDVKTLLRCSSLSKRFNSLVPQSESLTLRL.

In terms of assembly, part of a SCF (ASK-cullin-F-box) protein ligase complex.

It localises to the nucleus. The protein operates within protein modification; protein ubiquitination. Component of SCF(ASK-cullin-F-box) E3 ubiquitin ligase complexes, which may mediate the ubiquitination and subsequent proteasomal degradation of target proteins. The polypeptide is F-box protein AUF2 (Arabidopsis thaliana (Mouse-ear cress)).